We begin with the raw amino-acid sequence, 107 residues long: Universal stress protein B homolog (107 aa).

The next 2 membrane-spanning stretches (helical) occupy residues Thr-6–Leu-26 and Val-86–Ile-106.

It belongs to the universal stress protein B family.

It is found in the cell inner membrane. The protein is Universal stress protein B homolog of Vibrio parahaemolyticus serotype O3:K6 (strain RIMD 2210633).